We begin with the raw amino-acid sequence, 448 residues long: Bifunctional protein GlmU (448 aa).

The segment at 1–232 (MTARSSLTIV…EDEVRGINTK (232 aa)) is pyrophosphorylase. UDP-N-acetyl-alpha-D-glucosamine is bound by residues 11 to 14 (LAAG), Lys-25, Gln-78, and 83 to 84 (GT). Asp-108 contacts Mg(2+). The UDP-N-acetyl-alpha-D-glucosamine site is built by Gly-144, Glu-158, Asn-173, and Asn-230. Mg(2+) is bound at residue Asn-230. Positions 233-253 (AQLAQAEAAMQARLRQAAMDA) are linker. Residues 254-448 (GVTLIAPETV…FRNAKLRQTK (195 aa)) are N-acetyltransferase. Arg-319 and Lys-337 together coordinate UDP-N-acetyl-alpha-D-glucosamine. His-349 serves as the catalytic Proton acceptor. UDP-N-acetyl-alpha-D-glucosamine contacts are provided by Tyr-352 and Asn-363. Residues Ala-366, 372–373 (NY), Ser-409, and Arg-426 contribute to the acetyl-CoA site. Residues 427–448 (SPQTTKEGAAARFRNAKLRQTK) form a disordered region.

The protein in the N-terminal section; belongs to the N-acetylglucosamine-1-phosphate uridyltransferase family. In the C-terminal section; belongs to the transferase hexapeptide repeat family. Homotrimer. It depends on Mg(2+) as a cofactor.

The protein localises to the cytoplasm. The enzyme catalyses alpha-D-glucosamine 1-phosphate + acetyl-CoA = N-acetyl-alpha-D-glucosamine 1-phosphate + CoA + H(+). It carries out the reaction N-acetyl-alpha-D-glucosamine 1-phosphate + UTP + H(+) = UDP-N-acetyl-alpha-D-glucosamine + diphosphate. Its pathway is nucleotide-sugar biosynthesis; UDP-N-acetyl-alpha-D-glucosamine biosynthesis; N-acetyl-alpha-D-glucosamine 1-phosphate from alpha-D-glucosamine 6-phosphate (route II): step 2/2. It functions in the pathway nucleotide-sugar biosynthesis; UDP-N-acetyl-alpha-D-glucosamine biosynthesis; UDP-N-acetyl-alpha-D-glucosamine from N-acetyl-alpha-D-glucosamine 1-phosphate: step 1/1. The protein operates within bacterial outer membrane biogenesis; LPS lipid A biosynthesis. Catalyzes the last two sequential reactions in the de novo biosynthetic pathway for UDP-N-acetylglucosamine (UDP-GlcNAc). The C-terminal domain catalyzes the transfer of acetyl group from acetyl coenzyme A to glucosamine-1-phosphate (GlcN-1-P) to produce N-acetylglucosamine-1-phosphate (GlcNAc-1-P), which is converted into UDP-GlcNAc by the transfer of uridine 5-monophosphate (from uridine 5-triphosphate), a reaction catalyzed by the N-terminal domain. This chain is Bifunctional protein GlmU, found in Bradyrhizobium sp. (strain ORS 278).